A 160-amino-acid polypeptide reads, in one-letter code: Nascent polypeptide-associated complex subunit beta (160 aa).

2 disordered regions span residues 16–36 (GGKG…GTDD) and 118–160 (ESYQ…TEVE). Residues 20–30 (TPRRKVKKVHK) are compositionally biased toward basic residues. The 66-residue stretch at 33-98 (GTDDKKLQTA…GEDKELTELV (66 aa)) folds into the NAC-A/B domain. Residues 124–134 (QKEKGEDGDKK) are compositionally biased toward basic and acidic residues. Acidic residues predominate over residues 135–145 (DDDDEDDDDIP).

The protein belongs to the NAC-beta family. In terms of assembly, part of the nascent polypeptide-associated complex (NAC), consisting of EGD2 and EGD1. NAC associates with ribosomes via EGD1.

The protein resides in the cytoplasm. The protein localises to the nucleus. In terms of biological role, component of the nascent polypeptide-associated complex (NAC), a dynamic component of the ribosomal exit tunnel, protecting the emerging polypeptides from interaction with other cytoplasmic proteins to ensure appropriate nascent protein targeting. The NAC complex also promotes mitochondrial protein import by enhancing productive ribosome interactions with the outer mitochondrial membrane and blocks the inappropriate interaction of ribosomes translating non-secretory nascent polypeptides with translocation sites in the membrane of the endoplasmic reticulum. EGD1 may act as a transcription factor that exert a negative effect on the expression of several genes that are transcribed by RNA polymerase II. The chain is Nascent polypeptide-associated complex subunit beta (EGD1) from Phaeosphaeria nodorum (strain SN15 / ATCC MYA-4574 / FGSC 10173) (Glume blotch fungus).